The sequence spans 296 residues: Phosphoribosylaminoimidazole-succinocarboxamide synthase (296 aa).

This sequence belongs to the SAICAR synthetase family.

The catalysed reaction is 5-amino-1-(5-phospho-D-ribosyl)imidazole-4-carboxylate + L-aspartate + ATP = (2S)-2-[5-amino-1-(5-phospho-beta-D-ribosyl)imidazole-4-carboxamido]succinate + ADP + phosphate + 2 H(+). It participates in purine metabolism; IMP biosynthesis via de novo pathway; 5-amino-1-(5-phospho-D-ribosyl)imidazole-4-carboxamide from 5-amino-1-(5-phospho-D-ribosyl)imidazole-4-carboxylate: step 1/2. In Desulfotalea psychrophila (strain LSv54 / DSM 12343), this protein is Phosphoribosylaminoimidazole-succinocarboxamide synthase.